Here is an 80-residue protein sequence, read N- to C-terminus: Sulfur carrier protein TusA (80 aa).

The Cysteine persulfide intermediate role is filled by Cys17.

This sequence belongs to the sulfur carrier protein TusA family.

The protein localises to the cytoplasm. Sulfur carrier protein which probably makes part of a sulfur-relay system. The polypeptide is Sulfur carrier protein TusA (Pseudomonas entomophila (strain L48)).